Consider the following 208-residue polypeptide: Uracil phosphoribosyltransferase (208 aa).

5-phospho-alpha-D-ribose 1-diphosphate-binding positions include arginine 78, arginine 103, and 130-138 (DPMFATGGT). Uracil-binding positions include isoleucine 193 and 198-200 (GDA). Aspartate 199 serves as a coordination point for 5-phospho-alpha-D-ribose 1-diphosphate.

Belongs to the UPRTase family. Requires Mg(2+) as cofactor.

It carries out the reaction UMP + diphosphate = 5-phospho-alpha-D-ribose 1-diphosphate + uracil. It functions in the pathway pyrimidine metabolism; UMP biosynthesis via salvage pathway; UMP from uracil: step 1/1. With respect to regulation, allosterically activated by GTP. In terms of biological role, catalyzes the conversion of uracil and 5-phospho-alpha-D-ribose 1-diphosphate (PRPP) to UMP and diphosphate. The polypeptide is Uracil phosphoribosyltransferase (Campylobacter curvus (strain 525.92)).